Here is a 507-residue protein sequence, read N- to C-terminus: Carboxypeptidase sxa2 (507 aa).

The first 22 residues, 1–22, serve as a signal peptide directing secretion; sequence MLSLFLKSLFAIIIIELTIIHA. N-linked (GlcNAc...) asparagine glycosylation is found at N38 and N45. Positions 41–64 are disordered; sequence SASSNQTVQPRQHAAPSSDRIKSL. S200 is a catalytic residue. N-linked (GlcNAc...) asparagine glycans are attached at residues N259, N260, and N300. The active site involves D434. An N-linked (GlcNAc...) asparagine glycan is attached at N448. The active site involves H487.

The protein belongs to the peptidase S10 family.

Its subcellular location is the secreted. Functionally, involved in degradation or processing of the mating pheromones. Its loss causes a persistent response to the pheromones. It may be required for stabilization of enzymes that are essential for zygote formation. May degrade the mating pheromone P-factor. The sequence is that of Carboxypeptidase sxa2 (sxa2) from Schizosaccharomyces pombe (strain 972 / ATCC 24843) (Fission yeast).